A 260-amino-acid chain; its full sequence is MKLNKIKVIVAGFRGKMGATAVQMILNAQNFELMALLGKKEEVSEAFGVPVFSRKEDLIGFDADIWLDLTAPEAAYKNTRFALENGFRPVVGTTGFTDDEVADLIKFSREKELGGLIAPNFALGAVLLMQFSKQAVKYFPDVEIIELHHDGKKDAPSGTAVKTAELMSEERLAHHQGAVDEKEALAGARGADLEGMRIHSVRLPGLVAHQEVIFGSKGEGLTLRHDSYDRSSFMTGIALGIRKVMTVSELKYGLEHFLDL.

12–17 contacts NAD(+); sequence GFRGKM. An NADP(+)-binding site is contributed by Lys-40. NAD(+) is bound by residues 92–94 and 118–121; these read GTT and APNF. The active-site Proton donor/acceptor is His-148. Residue His-149 coordinates (S)-2,3,4,5-tetrahydrodipicolinate. Lys-152 functions as the Proton donor in the catalytic mechanism. 158 to 159 provides a ligand contact to (S)-2,3,4,5-tetrahydrodipicolinate; sequence GT.

Belongs to the DapB family.

The protein resides in the cytoplasm. It catalyses the reaction (S)-2,3,4,5-tetrahydrodipicolinate + NAD(+) + H2O = (2S,4S)-4-hydroxy-2,3,4,5-tetrahydrodipicolinate + NADH + H(+). The catalysed reaction is (S)-2,3,4,5-tetrahydrodipicolinate + NADP(+) + H2O = (2S,4S)-4-hydroxy-2,3,4,5-tetrahydrodipicolinate + NADPH + H(+). It participates in amino-acid biosynthesis; L-lysine biosynthesis via DAP pathway; (S)-tetrahydrodipicolinate from L-aspartate: step 4/4. Its function is as follows. Catalyzes the conversion of 4-hydroxy-tetrahydrodipicolinate (HTPA) to tetrahydrodipicolinate. The chain is 4-hydroxy-tetrahydrodipicolinate reductase from Lactococcus lactis subsp. lactis (strain IL1403) (Streptococcus lactis).